A 1096-amino-acid polypeptide reads, in one-letter code: Centrosome-associated zinc finger protein Cp190 (1096 aa).

Residues 1-209 (MGEVKSVKVD…GDSSNVKQEP (209 aa)) form an involved in microtubule and centrosome binding region. Residues 30 to 97 (CDLTLQFRDN…MYTGTLEFEL (68 aa)) form the BTB domain. Residues 126–308 (MENVNRQQRP…PQGTQTQLEH (183 aa)) form a disordered region. Composition is skewed to polar residues over residues 175 to 213 (RANTQRGSTGNTMSRTSGGSNRSPYGDSSNVKQEPTSPF) and 220 to 230 (YNNNKRPAQTS). Ser197 and Ser211 each carry phosphoserine. The nuclear localization stretch occupies residues 207 to 271 (QEPTSPFEQL…GDNDPEYDGG (65 aa)). Residues 210 to 245 (TSPFEQLRKGYNNNKRPAQTSLLSPPSKKPSLEEVK) form an involved in interaction with cliff region. Thr229 carries the post-translational modification Phosphothreonine. Ser233 bears the Phosphoserine mark. Over residues 239–252 (PSLEEVKEFAEQQR) the composition is skewed to basic and acidic residues. Positions 245–468 (KEFAEQQRMR…IAQGAENTTG (224 aa)) are centrosomal targeting M domain involved in interaction with ZIPIC. The segment covering 292–305 (STSKQQSPQGTQTQ) has biased composition (low complexity). 2 positions are modified to phosphoserine: Ser298 and Ser319. An involved in interaction with cliff region spans residues 309–390 (GSTTIILKQD…KPPANQSSAT (82 aa)). A disordered region spans residues 366–449 (NTPAAPTEKS…ANTAAAQKRR (84 aa)). The interval 385–508 (NQSSATTSPH…KETIDPALCE (124 aa)) is centrosomal localization and interaction with microtubules. A compositionally biased stretch (low complexity) spans 412–445 (AQQKAASSQQKSGTSQTTGNQGTGANPPANTAAA). 2 consecutive C2H2-type zinc fingers follow at residues 538–561 (AECALCNQSYRTKGELEAHINEVH) and 567–590 (QQCIYCNKVFEQELQLYRHMKSYH). A Phosphothreonine modification is found at Thr603. Positions 608-625 (LGSQDEEEEAEGDEEQEP) are enriched in acidic residues. Positions 608–630 (LGSQDEEEEAEGDEEQEPEQTGK) are disordered. A phosphoserine mark is found at Ser610, Ser708, and Ser723. Residues 710–733 (PEAEHVKQETDEKSLAGTEEEYDD) form a disordered region. Residues 711–723 (EAEHVKQETDEKS) are compositionally biased toward basic and acidic residues. The residue at position 727 (Thr727) is a Phosphothreonine. Ser745, Ser748, Ser757, and Ser760 each carry phosphoserine. The segment at 770–927 (LIAESEEQSN…EDSPIPHSDS (158 aa)) is disordered. Residues 777–799 (QSNKEPKSDKPRDDISEKLKELT) show a composition bias toward basic and acidic residues. Acidic residues predominate over residues 802 to 812 (WTEDENDDDVD). Phosphothreonine is present on Thr817. Basic and acidic residues-rich tracts occupy residues 825 to 834 (ANKDPEPTVH), 849 to 861 (KGPEEATEEKASE), 882 to 907 (EKMDVDSEAADEKASKAEVQIKKEAE), and 914 to 927 (EFIKEDSPIPHSDS). A phosphoserine mark is found at Ser920, Ser925, and Ser927. The residue at position 936 (Thr936) is a Phosphothreonine. At Ser938 the chain carries Phosphoserine. Basic and acidic residues-rich tracts occupy residues 960-973 (IAEAEKPDQEKDIV) and 1011-1035 (AAEKAAENNEDTRTADEKEAVEDKP). A disordered region spans residues 960-1096 (IAEAEKPDQE…GVSAAAKEEL (137 aa)). Residues Ser1071 and Ser1074 each carry the phosphoserine modification. Over residues 1076–1086 (WGDDDEDEDEN) the composition is skewed to acidic residues.

In terms of assembly, homodimerizes via the N-terminal BTB domain. Component of the gypsy chromatin insulator complex, composed of Cp190, mod(mdg4) and su(Hw). The gypsy chromatin insulator complex interacts with Topors via mod(mdg4) and su(Hw). Interacts with Cp60. Interacts with inv. Interacts with Nup98. Interacts (via BTB domain) with pita (via region between the ZAD domain and the first zinc finger domain); the interaction is direct. Interacts with ZIPIC (via region between the ZAD domain and the first zinc finger domain); the interaction is direct. Interacts (via regions between the BTB domain and first zinc finger domain) with cliff (via regions flanking MADF domain 1); the interaction is probably direct. Associates (via N-terminus) with microtubules; the interaction is direct, is enhanced by dimerization and involves multiple regions within the N-terminus. Microtubule association is enriched at growing plus ends. As to expression, expressed in spermatids but not in mature spermatozoa. Localizes within the spermatids to a sheath of microtubules around the nucleus and to microtubules within the tail.

Its subcellular location is the nucleus. The protein localises to the cytoplasm. It is found in the cytoskeleton. The protein resides in the microtubule organizing center. It localises to the centrosome. Its subcellular location is the chromosome. The protein localises to the nucleoplasm. In terms of biological role, plays a central role in chromatin domain organization and boundary function through recruitment by a range of insulator DNA-binding proteins, including ZIPIC, pita, CTCF, su(Hw), cliff and others. Together with pita and CTCF cooperatively binds to and regulates the activity of the Miscadastral pigmentation (MCP) insulator. Cooperatively recruited to the front-ultraabdominal (Fub) boundary by pita, su(Hw) and cliff. Recruitment of Cp190 together with Chro/chromator induces chromatin decondensation. Component of the gypsy chromatin insulator complex which is required for the function of the gypsy chromatin insulator and other endogenous chromatin insulators. Chromatin insulators are regulatory elements that establish independent domains of transcriptional activity within eukaryotic genomes. Insulators have two defining properties; they can block the communication between an enhancer and a promoter when placed between them and can also buffer transgenes from position effect variegation (PEV). Insulators are proposed to structure the chromatin fiber into independent domains of differing transcriptional potential by promoting the formation of distinct chromatin loops to form topologically associating domains (TADs). This chromatin looping may involve the formation of insulator bodies, where homotypic interactions between individual subunits of the insulator complex could promote the clustering of widely spaced insulators at the nuclear periphery. Within the gypsy insulator complex, this protein may directly bind to insulator DNA at sites distinct from those recognized by su(Hw). Required during embryogenesis for axial expansion, an actin/myosin dependent process that distributes the dividing nuclei along the anterior-posterior axis of the syncytial embryo. Associates with centrosomes and interphase microtubules during mitosis, and recruits CP60; may have a role in maintaining centrosome and spindle integrity. This chain is Centrosome-associated zinc finger protein Cp190, found in Drosophila melanogaster (Fruit fly).